We begin with the raw amino-acid sequence, 354 residues long: MLRMRTRSASWMELPRRVVAGAGALANIGDVCVDLRLSGRALVITGPQTRSVAGDNLAASLTDCGFEADVVITRDPRPAEVDRVKSFALDYKADFLIGAGGGRSIDIAKLAAYHLDIPYLSVPTAASHDGIASAMASLNMDGETKSIPTRAPLAIIADTGIISKAPPRLMSAGCGDIISNYTAILDWRLAKRLKCEDYSEYAAALSSMTAKMVVDMAPSIKPGHEPSAKVVVQALISSGVAMSIAGSSRPASGSEHMFAHALNRIAPGRGLHGELCGIGTIIMMYLHGGDWRMIREALKVLGAPASAHELNIPEDVVVEALTQAHKIRPERYTILGNGLTEAAARAAAETTKVI.

Residues 102–106 and 124–127 each bind NAD(+); these read GRSID and TAAS. Residue Asp-129 coordinates substrate. Ser-133 provides a ligand contact to NAD(+). Residue Asp-176 coordinates substrate. 2 residues coordinate Zn(2+): Asp-176 and His-256. His-260 is a substrate binding site. His-272 contacts Zn(2+).

It belongs to the glycerol-1-phosphate dehydrogenase family. The cofactor is Zn(2+).

Its subcellular location is the cytoplasm. The catalysed reaction is sn-glycerol 1-phosphate + NAD(+) = dihydroxyacetone phosphate + NADH + H(+). The enzyme catalyses sn-glycerol 1-phosphate + NADP(+) = dihydroxyacetone phosphate + NADPH + H(+). It functions in the pathway membrane lipid metabolism; glycerophospholipid metabolism. Functionally, catalyzes the NAD(P)H-dependent reduction of dihydroxyacetonephosphate (DHAP or glycerone phosphate) to glycerol 1-phosphate (G1P). The G1P thus generated is used as the glycerophosphate backbone of phospholipids in the cellular membranes of Archaea. This is Glycerol-1-phosphate dehydrogenase [NAD(P)+] from Methanothrix thermoacetophila (strain DSM 6194 / JCM 14653 / NBRC 101360 / PT) (Methanosaeta thermophila).